Reading from the N-terminus, the 317-residue chain is Ribosomal protein L11 methyltransferase (317 aa).

S-adenosyl-L-methionine-binding residues include Thr158, Gly179, Asp201, and Asn244.

The protein belongs to the methyltransferase superfamily. PrmA family.

It is found in the cytoplasm. It carries out the reaction L-lysyl-[protein] + 3 S-adenosyl-L-methionine = N(6),N(6),N(6)-trimethyl-L-lysyl-[protein] + 3 S-adenosyl-L-homocysteine + 3 H(+). Functionally, methylates ribosomal protein L11. The sequence is that of Ribosomal protein L11 methyltransferase from Streptococcus pyogenes serotype M18 (strain MGAS8232).